The sequence spans 508 residues: ATP synthase subunit alpha (508 aa).

169–176 contributes to the ATP binding site; it reads GDRQTGKT.

Belongs to the ATPase alpha/beta chains family. In terms of assembly, F-type ATPases have 2 components, CF(1) - the catalytic core - and CF(0) - the membrane proton channel. CF(1) has five subunits: alpha(3), beta(3), gamma(1), delta(1), epsilon(1). CF(0) has three main subunits: a(1), b(2) and c(9-12). The alpha and beta chains form an alternating ring which encloses part of the gamma chain. CF(1) is attached to CF(0) by a central stalk formed by the gamma and epsilon chains, while a peripheral stalk is formed by the delta and b chains.

Its subcellular location is the cell inner membrane. The catalysed reaction is ATP + H2O + 4 H(+)(in) = ADP + phosphate + 5 H(+)(out). In terms of biological role, produces ATP from ADP in the presence of a proton gradient across the membrane. The alpha chain is a regulatory subunit. This is ATP synthase subunit alpha from Allorhizobium ampelinum (strain ATCC BAA-846 / DSM 112012 / S4) (Agrobacterium vitis (strain S4)).